The following is an 876-amino-acid chain: Vacuolar protein sorting-associated protein 39 homolog (876 aa).

The region spanning 14–310 (GVQIESIAAY…KFLVHADKGT (297 aa)) is the CNH domain. Residues 578–741 (ELIEVESLPR…ILIPPTQPLY (164 aa)) form a CHCR repeat.

This sequence belongs to the VAM6/VPS39 family. As to quaternary structure, part of the homotypic fusion and vacuole protein sorting (HOPS) complex, composed of Vps16A, car/Vps33A, dor/Vps18, Vps39, Vps11 and lt/Vps41. Interacts with Rab2 (GTP-bound form); the interaction is probably direct.

The protein localises to the cytoplasm. Its subcellular location is the lysosome membrane. It localises to the late endosome membrane. It is found in the late endosome. The protein resides in the lysosome. In terms of biological role, part of the homotypic fusion and vacuole protein sorting (HOPS) tethering complex involved in endo-lysosomal vesicle trafficking and lysosome biogenesis. The HOPS complex facilitates docking and fusion of lysosomes with late endosomes and several other types of vesicles. The HOPS complex is also involved in autophagy and crinophagy (the elimination of unused secretory granules through their fusion with lysosomes). The HOPS complex mediates autophagocitic flux, probably by binding autophagosome-associated Syx17/syntaxin 17, promoting assembly of the trans-SNARE complex and instigating autophagosome-lysosome fusion. Independent of Syx17/syntaxin 17, HOPS is involved in biosynthetic transport to lysosomes and lysosome-related organelles such as eye-pigment granules. Required for autophagocytosis-dependent remodeling of myofibrils and transverse-tubules (T-tubules) during metamorphosis. This Drosophila melanogaster (Fruit fly) protein is Vacuolar protein sorting-associated protein 39 homolog.